A 127-amino-acid chain; its full sequence is ALK and LTK ligand 1 (127 aa).

The first 27 residues, 1–27 (MWLTKPSTPVSALLLLALALSPPGTQG), serve as a signal peptide directing secretion. 2 cysteine pairs are disulfide-bonded: cysteine 88/cysteine 124 and cysteine 102/cysteine 111.

It belongs to the ALKAL family.

It localises to the secreted. The protein resides in the cell membrane. In terms of biological role, cytokine that acts as a physiological ligand for receptor tyrosine kinase LTK, leading to its activation. Monomeric ALKAL1 binds to LTK, leading to LTK homodimerization and activation. In contrast to ALKAL2, does not act as a potent physiological ligand for ALK. The chain is ALK and LTK ligand 1 from Mus musculus (Mouse).